Reading from the N-terminus, the 431-residue chain is Adenylosuccinate synthetase (431 aa).

GTP-binding positions include 12-18 (GDEGKGK) and 40-42 (GHT). D13 functions as the Proton acceptor in the catalytic mechanism. Mg(2+)-binding residues include D13 and G40. IMP contacts are provided by residues 13 to 16 (DEGK), 38 to 41 (NAGH), T130, R144, Q225, T240, and R304. The active-site Proton donor is the H41. 300-306 (STTGRPR) contributes to the substrate binding site. GTP-binding positions include R306, 332-334 (KMD), and 414-416 (SIG).

This sequence belongs to the adenylosuccinate synthetase family. As to quaternary structure, homodimer. Requires Mg(2+) as cofactor.

Its subcellular location is the cytoplasm. The catalysed reaction is IMP + L-aspartate + GTP = N(6)-(1,2-dicarboxyethyl)-AMP + GDP + phosphate + 2 H(+). Its pathway is purine metabolism; AMP biosynthesis via de novo pathway; AMP from IMP: step 1/2. Functionally, plays an important role in the de novo pathway of purine nucleotide biosynthesis. Catalyzes the first committed step in the biosynthesis of AMP from IMP. The polypeptide is Adenylosuccinate synthetase (Syntrophotalea carbinolica (strain DSM 2380 / NBRC 103641 / GraBd1) (Pelobacter carbinolicus)).